The following is a 161-amino-acid chain: General odorant-binding protein 2 (161 aa).

Positions 1-20 (MVNRLILMVVVVFITDSVMG) are cleaved as a signal peptide. 3 cysteine pairs are disulfide-bonded: Cys39–Cys74, Cys70–Cys128, and Cys117–Cys137.

The protein belongs to the PBP/GOBP family. Homodimer. In terms of tissue distribution, olfactory tissue; expressed by the glia-like support cells that ensheathe the sensory neurons and line the base of the sensillum lumen.

Present in the aqueous fluid surrounding olfactory sensory dendrites and are thought to aid in the capture and transport of hydrophobic odorants into and through this fluid. This is General odorant-binding protein 2 (GOBP2) from Manduca sexta (Tobacco hawkmoth).